A 603-amino-acid chain; its full sequence is Beta-glucuronidase (603 aa).

D163 and N412 together coordinate D-glucuronate. The Proton donor role is filled by E413. 5 residues coordinate D-glucuronate: N466, Y472, E504, W549, and K568. The Nucleophile role is filled by E504. The N-K motif motif lies at 566–568; that stretch reads NKK.

It belongs to the glycosyl hydrolase 2 family. In terms of assembly, homotetramer.

It carries out the reaction a beta-D-glucuronoside + H2O = D-glucuronate + an alcohol. The enzyme catalyses 4-methylumbelliferone beta-D-glucuronate + H2O = 4-methylumbelliferone + D-glucuronate. Potently inhibited by a set of synthetic compounds like thio-urea derivatives and analogs, and uronic isofagomine (UIFG) derivatives. Inhibitors of gut microbial beta-glucuronidases block the reactivation of glucuronidated cancer drugs, and thereby alleviate drug-induced GI toxicity. Displays beta-glucuronidase activity with the artificial substrate p-nitrophenyl-beta-D-glucuronide (PNPG) and with 4-methylumbelliferyl-glucuronide. Is likely capable of scavenging glucuronate from a range of chemically distinct xenobiotic and endobiotic glucuronides present in the gastrointestinal (GI) tract, to be able to utilize these diverse sources of carbon. As part of the GI microbiome, this enzyme is able to reactivate glucuronide drug conjugates, such reactivated compounds can significantly damage the GI tract. The chain is Beta-glucuronidase (uidA) from Escherichia coli (strain K12).